The following is a 341-amino-acid chain: MLILTKVNIYMLIIVLWLYGYNFIISESQCPMINDDSFTLKRKYQIDSAESTIKMDKKRTKFQNRAKMVKEINQTIRAAQTHYETLKLGYIKFKRMIRTTTLEDIAPSIPNNQKTYKLFSDISAIGKASRNPSKMVYALLLYMFPNLFGDDHRFIRYRMHPMSKIKHKIFSPFKLNLIRILVEERFYNNECRSNKWRIIGTQVDKMLIAESDKYTIDARYNLKPMYRIKGKSEEDTLFIKQMVEQCVTSQELVEKVLKILFRDLFKSGEYKAYRYDDDVENGFIGLDTLKLNIVHDIVEPCMPVRRPVAKILCKEMVNKYFENPLHIIGKNLQECIDFVSE.

A helical transmembrane segment spans residues 7–25 (VNIYMLIIVLWLYGYNFII). BEN domains lie at 112–222 (NQKT…RYNL) and 233–328 (EEDT…LHII).

It belongs to the orthopoxvirus OPG067 family. In terms of assembly, interacts with host CGAS; this interaction inhibits CGAS-mediated type I interferon response.

Its subcellular location is the host cytoplasm. The protein resides in the host nucleus. The protein localises to the membrane. Major early protein present in virus factories. The presence of BEN domains suggests a possible role in organization of viral DNA during replication or transcription. Plays an essential role in the inhibition of the cGAS-dependent type I IFN induction in host dendritic cells. Mechanistically, abolishes cGAMP production by triggering host CGAS degradation via a proteasome-dependent mechanism. The polypeptide is Protein OPG067 (OPG067) (Vaccinia virus (strain Western Reserve) (VACV)).